Reading from the N-terminus, the 154-residue chain is Deoxyuridine 5'-triphosphate nucleotidohydrolase (154 aa).

Substrate is bound by residues 64–66 (RSG), Asn-77, 81–83 (TID), and Lys-91.

Belongs to the dUTPase family. Homotrimer. Requires Mg(2+) as cofactor.

It carries out the reaction dUTP + H2O = dUMP + diphosphate + H(+). It functions in the pathway pyrimidine metabolism; dUMP biosynthesis; dUMP from dCTP (dUTP route): step 2/2. Functionally, this enzyme is involved in nucleotide metabolism: it produces dUMP, the immediate precursor of thymidine nucleotides and it decreases the intracellular concentration of dUTP so that uracil cannot be incorporated into DNA. This is Deoxyuridine 5'-triphosphate nucleotidohydrolase from Mycobacterium bovis (strain BCG / Pasteur 1173P2).